The chain runs to 80 residues: Protein FAM229B (80 aa).

The disordered stretch occupies residues 1–44 (MPFRFGTQPRRFPVEGGDSSIGLEPGLSSSAACNGKEMSPTRQL).

Belongs to the FAM229 family.

The protein is Protein FAM229B (FAM229B) of Macaca fascicularis (Crab-eating macaque).